The sequence spans 574 residues: Septation ring formation regulator EzrA (574 aa).

Residues 1–7 (MSSGIIL) lie on the Extracellular side of the membrane. The chain crosses the membrane as a helical span at residues 8 to 26 (LIVAIVLLVIIAYLVGVII). Residues 27 to 574 (RKRNDSLITS…YEKTREHIRF (548 aa)) are Cytoplasmic-facing. 3 coiled-coil regions span residues 102–141 (NFIR…EEKN), 274–350 (ELVT…ETES), and 459–520 (QLEA…SFEA).

Belongs to the EzrA family.

The protein resides in the cell membrane. Its function is as follows. Negative regulator of FtsZ ring formation; modulates the frequency and position of FtsZ ring formation. Inhibits FtsZ ring formation at polar sites. Interacts either with FtsZ or with one of its binding partners to promote depolymerization. This is Septation ring formation regulator EzrA from Streptococcus pyogenes serotype M4 (strain MGAS10750).